A 207-amino-acid polypeptide reads, in one-letter code: D-aminoacyl-tRNA deacylase 1 (207 aa).

The short motif at 139–140 (GP) is the Gly-cisPro motif, important for rejection of L-amino acids element. The disordered stretch occupies residues 142 to 207 (TIQLESPPAP…EGDVSSEREP (66 aa)). Composition is skewed to basic and acidic residues over residues 156–167 (LLSKQEKQQQRK) and 178–189 (SSREKAAQRSKV).

This sequence belongs to the DTD family. As to quaternary structure, homodimer.

The protein localises to the cytoplasm. It carries out the reaction a D-aminoacyl-tRNA + H2O = a tRNA + a D-alpha-amino acid + H(+). The enzyme catalyses glycyl-tRNA(Ala) + H2O = tRNA(Ala) + glycine + H(+). D-aminoacyl-tRNA deacylase, with no observable activity on tRNAs charged with their cognate L-amino acid. Hydrolyzes correctly charged, achiral, glycyl-tRNA(Gly). Deacylates mischarged D.melanogaster and E.coli glycyl-tRNA(Ala), protecting cells against glycine mischarging by AlaRS. Acts via tRNA-based rather than protein-based catalysis; rejects L-amino acids rather than detecting D-amino acids in the active site. By recycling D-aminoacyl-tRNA to D-amino acids and free tRNA molecules, this enzyme counteracts the toxicity associated with the formation of D-aminoacyl-tRNA entities in vivo and helps enforce protein L-homochirality. The sequence is that of D-aminoacyl-tRNA deacylase 1 from Danio rerio (Zebrafish).